Consider the following 555-residue polypeptide: Coiled-coil domain-containing protein 102A (555 aa).

Disordered stretches follow at residues 1 to 68, 136 to 202, and 214 to 254; these read MSHG…ADGD, LAGA…GSQE, and PEEP…EEDA. A phosphoserine mark is found at S12, S26, and S28. The span at 37-61 shows a compositional bias: pro residues; it reads SLPPTPPSGTPSPGPPPALPLPPTP. Residues 72–161 are a coiled coil; that stretch reads REELRLRELE…ARGRELARLR (90 aa). 2 stretches are compositionally biased toward basic and acidic residues: residues 136 to 159 and 166 to 183; these read LAGA…ELAR and GVDR…REQE. Over residues 224–236 the composition is skewed to low complexity; the sequence is RSAGAGAPRGSSG. Coiled-coil stretches lie at residues 268 to 401 and 432 to 522; these read QKVL…RRQT and KLKK…QNAP. The tract at residues 478–555 is disordered; the sequence is ELDEAHNQAR…EDEDLQIQVA (78 aa). Over residues 536–555 the composition is skewed to acidic residues; that stretch reads EAGDGASDLDEDEDLQIQVA. Phosphoserine is present on S542.

In Bos taurus (Bovine), this protein is Coiled-coil domain-containing protein 102A (CCDC102A).